The chain runs to 1509 residues: ABC transporter G family member 5 (1509 aa).

Residues methionine 1–serine 10 show a composition bias toward basic and acidic residues. Positions methionine 1–lysine 70 are disordered. A compositionally biased stretch (polar residues) spans serine 11–leucine 28. Over residues asparagine 29–asparagine 66 the composition is skewed to low complexity. In terms of domain architecture, ABC transporter 1 spans valine 129–serine 376. Position 168-175 (glycine 168–serine 175) interacts with ATP. Residues serine 472–leucine 748 enclose the ABC transmembrane type-2 1 domain. 7 consecutive transmembrane segments (helical) span residues asparagine 477–tryptophan 497, leucine 512–phenylalanine 532, isoleucine 557–tryptophan 577, proline 583–leucine 603, isoleucine 616–phenylalanine 636, isoleucine 643–leucine 663, and isoleucine 725–leucine 745. Positions proline 813–asparagine 831 are enriched in low complexity. The tract at residues proline 813 to serine 881 is disordered. The segment covering threonine 839 to serine 881 has biased composition (polar residues). Positions leucine 888–glycine 1141 constitute an ABC transporter 2 domain. Glycine 935 to serine 942 is a binding site for ATP. One can recognise an ABC transmembrane type-2 2 domain in the interval leucine 1231–valine 1504. 6 helical membrane-spanning segments follow: residues isoleucine 1236–valine 1256, leucine 1271–valine 1291, tyrosine 1320–leucine 1340, cysteine 1352–valine 1372, methionine 1379–isoleucine 1399, and isoleucine 1481–phenylalanine 1501.

The protein belongs to the ABC transporter superfamily. ABCG family. PDR (TC 3.A.1.205) subfamily.

It is found in the membrane. The sequence is that of ABC transporter G family member 5 (abcG5) from Dictyostelium discoideum (Social amoeba).